The sequence spans 212 residues: Probable nicotinate-nucleotide adenylyltransferase (212 aa).

The protein belongs to the NadD family.

The catalysed reaction is nicotinate beta-D-ribonucleotide + ATP + H(+) = deamido-NAD(+) + diphosphate. It functions in the pathway cofactor biosynthesis; NAD(+) biosynthesis; deamido-NAD(+) from nicotinate D-ribonucleotide: step 1/1. Catalyzes the reversible adenylation of nicotinate mononucleotide (NaMN) to nicotinic acid adenine dinucleotide (NaAD). The sequence is that of Probable nicotinate-nucleotide adenylyltransferase from Shewanella sp. (strain MR-7).